A 73-amino-acid polypeptide reads, in one-letter code: Small ribosomal subunit protein bS18 (73 aa).

Belongs to the bacterial ribosomal protein bS18 family. Part of the 30S ribosomal subunit. Forms a tight heterodimer with protein bS6.

Functionally, binds as a heterodimer with protein bS6 to the central domain of the 16S rRNA, where it helps stabilize the platform of the 30S subunit. This chain is Small ribosomal subunit protein bS18, found in Prochlorococcus marinus subsp. pastoris (strain CCMP1986 / NIES-2087 / MED4).